The chain runs to 376 residues: MQVKRIIHINVSFTLMLSWDETLFKNPEVFDPDYIPDELLFRDGQIRQLVSCIKPAMLNSSPINAFCLGPPSTGKTSTIRYVLREAERETGLLYSYIRIPRFKEPYKVFSKIFQDVLGQQSPPSGISKTVLMDRVWSNLDEPLLVVLDDINFLGKNYANEILYEILKAPDEYGVKVGIVAAATDVKFPLLLDPFVGASFHYMEIHYPSYGYAEIEGILRKRVEHGFYEGVFDDGAFRRVVELAYRASDVRYGIYLLKAAGMNAESRGSRKVEERDVEVAHAGESLSFIAKILTALNSEERAVLRMIYSQNAISTGDLYEQVCSEIKMSYRKYYNILEKLERLKLIEISFGEKGRGKTRYVQGKYDAEVVDRAMQLI.

ATP contacts are provided by residues 73–77, tyrosine 209, and arginine 221; that span reads TGKTS.

This sequence belongs to the CDC6/cdc18 family.

Its function is as follows. Involved in regulation of DNA replication. In Archaeoglobus fulgidus (strain ATCC 49558 / DSM 4304 / JCM 9628 / NBRC 100126 / VC-16), this protein is ORC1-type DNA replication protein 2 (cdc6-2).